The following is a 171-amino-acid chain: Protein phosphatase 1 regulatory subunit 1A (171 aa).

The residue at position 1 (Met-1) is an N-acetylmethionine. Residues 9–12 form an essential for activity region; the sequence is KIQF. The interval 17–171 is disordered; the sequence is LEPHLDPEAA…PLDSQGASLV (155 aa). Residues 19 to 29 show a composition bias toward basic and acidic residues; the sequence is PHLDPEAAEQI. Thr-35 is modified (phosphothreonine; by PKA). The essential for activity stretch occupies residues 42–54; that stretch reads TSDQSSPEVDEDR. Residues Ser-43, Ser-46, Ser-47, and Ser-67 each carry the phosphoserine modification. Residues 122–133 show a composition bias toward polar residues; it reads GSASRPDTSGTA. The segment covering 137–148 has biased composition (basic and acidic residues); sequence AESKPKTQEQRG. The interval 143 to 171 is interaction with PPP1R15A; that stretch reads TQEQRGVEPSTEDLSAHMLPLDSQGASLV.

Belongs to the protein phosphatase inhibitor 1 family. Interacts with PPP1R15A. In terms of processing, phosphorylation of Thr-35 is required for activity.

Functionally, inhibitor of protein-phosphatase 1. This protein may be important in hormonal control of glycogen metabolism. Hormones that elevate intracellular cAMP increase I-1 activity in many tissues. I-1 activation may impose cAMP control over proteins that are not directly phosphorylated by PKA. Following a rise in intracellular calcium, I-1 is inactivated by calcineurin (or PP2B). Does not inhibit type-2 phosphatases. The polypeptide is Protein phosphatase 1 regulatory subunit 1A (Ppp1r1a) (Rattus norvegicus (Rat)).